A 306-amino-acid chain; its full sequence is Pantothenate kinase (306 aa).

91–98 (GSVAVGKS) is an ATP binding site.

It belongs to the prokaryotic pantothenate kinase family.

The protein localises to the cytoplasm. It catalyses the reaction (R)-pantothenate + ATP = (R)-4'-phosphopantothenate + ADP + H(+). Its pathway is cofactor biosynthesis; coenzyme A biosynthesis; CoA from (R)-pantothenate: step 1/5. In Streptococcus pneumoniae serotype 4 (strain ATCC BAA-334 / TIGR4), this protein is Pantothenate kinase (coaA).